We begin with the raw amino-acid sequence, 230 residues long: Oxaloacetate tautomerase FAHD1, mitochondrial (230 aa).

Residues methionine 1–tyrosine 26 constitute a mitochondrion transit peptide. Mg(2+) contacts are provided by glutamate 73, glutamate 75, and aspartate 104.

Belongs to the FAH family. Requires Mg(2+) as cofactor. Mn(2+) serves as cofactor.

It localises to the mitochondrion. The catalysed reaction is oxaloacetate = enol-oxaloacetate. Its function is as follows. Tautomerase that converts enol-oxaloacetate, a strong inhibitor of succinate dehydrogenase, to the physiological keto form of oxaloacetate. In Oryza sativa subsp. japonica (Rice), this protein is Oxaloacetate tautomerase FAHD1, mitochondrial.